A 77-amino-acid chain; its full sequence is UPF0291 protein RBAM_017680 (77 aa).

A disordered region spans residues 55 to 77; the sequence is IDPEGNDVTPEKLKREQQKNNLH. Basic and acidic residues predominate over residues 63–77; it reads TPEKLKREQQKNNLH.

The protein belongs to the UPF0291 family.

It localises to the cytoplasm. This is UPF0291 protein RBAM_017680 from Bacillus velezensis (strain DSM 23117 / BGSC 10A6 / LMG 26770 / FZB42) (Bacillus amyloliquefaciens subsp. plantarum).